Here is a 214-residue protein sequence, read N- to C-terminus: Cytochrome b (214 aa).

The next 4 membrane-spanning stretches (helical) occupy residues 31 to 51, 75 to 96, 111 to 131, and 176 to 196; these read FGSM…FLAI, WIMQ…YIHI, WLSG…GYVL, and FFAL…IHIL. Residues His81 and His95 each contribute to the heme b site. Heme b is bound by residues His180 and His194. His199 is an a ubiquinone binding site.

Belongs to the cytochrome b family. The cytochrome bc1 complex contains 3 respiratory subunits (MT-CYB, CYC1 and UQCRFS1), 2 core proteins (UQCRC1 and UQCRC2) and probably 6 low-molecular weight proteins. Heme b is required as a cofactor.

It localises to the mitochondrion inner membrane. Functionally, component of the ubiquinol-cytochrome c reductase complex (complex III or cytochrome b-c1 complex) that is part of the mitochondrial respiratory chain. The b-c1 complex mediates electron transfer from ubiquinol to cytochrome c. Contributes to the generation of a proton gradient across the mitochondrial membrane that is then used for ATP synthesis. The polypeptide is Cytochrome b (MT-CYB) (Bothrops bilineatus (Green jararaca)).